The sequence spans 388 residues: Outer membrane protein assembly factor BamB (388 aa).

An N-terminal signal peptide occupies residues 1-21 (MILGWTQRIFTLLVVVTLLAA). The N-palmitoyl cysteine moiety is linked to residue Cys22. Residue Cys22 is the site of S-diacylglycerol cysteine attachment.

This sequence belongs to the BamB family. As to quaternary structure, part of the Bam complex.

It is found in the cell outer membrane. In terms of biological role, part of the outer membrane protein assembly complex, which is involved in assembly and insertion of beta-barrel proteins into the outer membrane. The polypeptide is Outer membrane protein assembly factor BamB (Kangiella koreensis (strain DSM 16069 / JCM 12317 / KCTC 12182 / SW-125)).